The sequence spans 407 residues: Arginine biosynthesis bifunctional protein ArgJ (407 aa).

Residues Thr157, Lys183, Thr194, Glu280, Asn402, and Thr407 each coordinate substrate. The active-site Nucleophile is the Thr194.

Belongs to the ArgJ family. Heterotetramer of two alpha and two beta chains.

It localises to the cytoplasm. It catalyses the reaction N(2)-acetyl-L-ornithine + L-glutamate = N-acetyl-L-glutamate + L-ornithine. The catalysed reaction is L-glutamate + acetyl-CoA = N-acetyl-L-glutamate + CoA + H(+). The protein operates within amino-acid biosynthesis; L-arginine biosynthesis; L-ornithine and N-acetyl-L-glutamate from L-glutamate and N(2)-acetyl-L-ornithine (cyclic): step 1/1. It participates in amino-acid biosynthesis; L-arginine biosynthesis; N(2)-acetyl-L-ornithine from L-glutamate: step 1/4. Functionally, catalyzes two activities which are involved in the cyclic version of arginine biosynthesis: the synthesis of N-acetylglutamate from glutamate and acetyl-CoA as the acetyl donor, and of ornithine by transacetylation between N(2)-acetylornithine and glutamate. The sequence is that of Arginine biosynthesis bifunctional protein ArgJ from Oceanobacillus iheyensis (strain DSM 14371 / CIP 107618 / JCM 11309 / KCTC 3954 / HTE831).